The sequence spans 335 residues: Aliphatic sulfonates import ATP-binding protein SsuB (335 aa).

Residues 48–71 form a disordered region; it reads PFASGGAFGRAPRDDDDDRRGAGD. The region spanning 74-293 is the ABC transporter domain; the sequence is VRLTRVSKRY…ARASAAFAEL (220 aa). 106 to 113 contacts ATP; sequence GRSGCGKS.

It belongs to the ABC transporter superfamily. Aliphatic sulfonates importer (TC 3.A.1.17.2) family. The complex is composed of two ATP-binding proteins (SsuB), two transmembrane proteins (SsuC) and a solute-binding protein (SsuA).

It localises to the cell inner membrane. It carries out the reaction ATP + H2O + aliphatic sulfonate-[sulfonate-binding protein]Side 1 = ADP + phosphate + aliphatic sulfonateSide 2 + [sulfonate-binding protein]Side 1.. Functionally, part of the ABC transporter complex SsuABC involved in aliphatic sulfonates import. Responsible for energy coupling to the transport system. The sequence is that of Aliphatic sulfonates import ATP-binding protein SsuB from Burkholderia thailandensis (strain ATCC 700388 / DSM 13276 / CCUG 48851 / CIP 106301 / E264).